Consider the following 372-residue polypeptide: Probable leucine aminopeptidase MCYG_08380 (372 aa).

An N-terminal signal peptide occupies residues 1–19; it reads MKVSVLAAVAAFAAATAIA. A glycan (N-linked (GlcNAc...) asparagine) is linked at asparagine 96. 2 residues coordinate Zn(2+): histidine 175 and aspartate 194. N-linked (GlcNAc...) asparagine glycosylation is found at asparagine 195 and asparagine 219. Zn(2+) contacts are provided by glutamate 233 and aspartate 260. Cysteine 305 and cysteine 309 form a disulfide bridge. Histidine 338 contacts Zn(2+).

The protein belongs to the peptidase M28 family. M28E subfamily. As to quaternary structure, monomer. Zn(2+) serves as cofactor.

The protein localises to the secreted. Its function is as follows. Probable extracellular aminopeptidase which contributes to pathogenicity. In Arthroderma otae (strain ATCC MYA-4605 / CBS 113480) (Microsporum canis), this protein is Probable leucine aminopeptidase MCYG_08380.